We begin with the raw amino-acid sequence, 561 residues long: uncharacterized protein (561 aa).

A compositionally biased stretch (low complexity) spans 314–323 (ANNGSGDSSS). Residues 314–366 (ANNGSGDSSSTALNNESPNTTPKSRTFFSPKGHRRNSSHVSSLTSRSTKKPIT) are disordered. Residues 324–340 (TALNNESPNTTPKSRTF) are compositionally biased toward polar residues. Serine 514 carries the post-translational modification Phosphoserine.

The protein resides in the cytoplasm. This is an uncharacterized protein from Saccharomyces cerevisiae (strain ATCC 204508 / S288c) (Baker's yeast).